Consider the following 440-residue polypeptide: Chromosome partition protein MukF (440 aa).

The tract at residues 208-236 (LSETSGTLRELQDTLEAAGDKLQANLLRI) is leucine-zipper.

This sequence belongs to the MukF family. Interacts, and probably forms a ternary complex, with MukE and MukB via its C-terminal region. The complex formation is stimulated by calcium or magnesium. It is required for an interaction between MukE and MukB.

It localises to the cytoplasm. The protein localises to the nucleoid. Involved in chromosome condensation, segregation and cell cycle progression. May participate in facilitating chromosome segregation by condensation DNA from both sides of a centrally located replisome during cell division. Not required for mini-F plasmid partitioning. Probably acts via its interaction with MukB and MukE. Overexpression results in anucleate cells. It has a calcium binding activity. The polypeptide is Chromosome partition protein MukF (Salmonella gallinarum (strain 287/91 / NCTC 13346)).